The following is a 635-amino-acid chain: Threonine--tRNA ligase (635 aa).

The TGS domain occupies Met-1–Thr-61. Residues Asp-242 to Pro-533 form a catalytic region. Zn(2+) contacts are provided by Cys-333, His-384, and His-510.

It belongs to the class-II aminoacyl-tRNA synthetase family. Homodimer. Zn(2+) is required as a cofactor.

The protein resides in the cytoplasm. The catalysed reaction is tRNA(Thr) + L-threonine + ATP = L-threonyl-tRNA(Thr) + AMP + diphosphate + H(+). Catalyzes the attachment of threonine to tRNA(Thr) in a two-step reaction: L-threonine is first activated by ATP to form Thr-AMP and then transferred to the acceptor end of tRNA(Thr). Also edits incorrectly charged L-seryl-tRNA(Thr). In Burkholderia orbicola (strain MC0-3), this protein is Threonine--tRNA ligase.